The chain runs to 29 residues: Small toxic protein ZorO (29 aa).

The chain crosses the membrane as a helical span at residues Val10–Leu27.

The protein resides in the cell inner membrane. Functionally, toxic component of a type I toxin-antitoxin (TA) system. Expression in the absence of its cognate antitoxin (small sRNA orzO) leads to cell stasis and a decrease in colony-forming units. Repression of ZorO toxicity requires base pairing between zorO mRNA and sRNA OrzO, as well as RNase III (rnc), suggesting the mRNA is degraded. Base pairing occurs between 18 bases in the 5' UTR of zorO mRNA and the 5' end of OrzO sRNA. sRNA OrzP, which differs only in 4 of these 18 bases, does not repress ZorO toxicity. Integration of the protein into the inner membrane damages membrane integrity and affects membrane potential. It leads to increased levels of hydroxyl radicals. This is Small toxic protein ZorO from Escherichia coli O157:H7.